Here is a 478-residue protein sequence, read N- to C-terminus: MKMSIRTPPRLLELAGRSLLRDQALAMSTLEELPTELFPPLFMEAFSRRRCEALKLMVQAWPFRRLPLRPLIKMPCLEAFQAVLDGLDALLTQGVRPRRWKLQVLDLQDVCENFWMVWSEAMAHGCFLNAKRNKKPVQDCPRMRGRQPLTVFVELWLKNRTLDEYLTYLLLWVKQRKDLLHLCCKKLKILGMPFRNIRSILKMVNLDCIQEVEVNCKWVLPILTQFTPYLGHMRNLQKLVLSHMDVSRYVSPEQKKEIVTQFTTQFLKLRCLQKLYMNSVSFLEGHLDQLLSCLKTSLKVLTITNCVLLESDLKHLSQCPSISQLKTLDLSGIRLTNYSLVPLQILLEKVAATLEYLDLDDCGIIDSQVNAILPALSRCFELNTFSFCGNPICMATLENLLSHTIILKNLCVELYPAPRESYGADGTLCWSRFAQIRAELMNRVRDLRHPKRILFCTDYCPDCGNRSFYDLEADQYCC.

The LRR 1; degenerate repeat unit spans residues 99–126 (RWKLQVLDLQDVCENFWMVWSEAMAHGC). The stretch at 181 to 205 (HLCCKKLKILGMPFRNIRSILKMVN) is one LRR 2; degenerate repeat. One copy of the LRR 3; degenerate repeat lies at 206-232 (LDCIQEVEVNCKWVLPILTQFTPYLGH). An LRR 4; degenerate repeat occupies 233-268 (MRNLQKLVLSHMDVSRYVSPEQKKEIVTQFTTQFLK). LRR repeat units follow at residues 269 to 294 (LRCL…LSCL), 295 to 326 (KTSL…SQLK), 327 to 347 (TLDL…QILL), 351 to 378 (AATL…ALSR), and 379 to 403 (CFEL…LLSH).

It belongs to the PRAME family.

The protein is PRAME family member 15 of Homo sapiens (Human).